The primary structure comprises 571 residues: Optineurin (571 aa).

Disordered regions lie at residues 1–32 (MSHQ…HPNL) and 100–144 (LSHE…DQLR). Residues 38 to 170 (EELLQQMKEL…VSELQLKLNS (133 aa)) adopt a coiled-coil conformation. The interaction with Rab8 stretch occupies residues 58–209 (MKLNNQAMKG…GPTRTVSIGT (152 aa)). Positions 100–143 (LSHENEKLKEELGKLKGKSERSSEDPTDDSRLPRAEAEQEKDQL) are enriched in basic and acidic residues. The LIR motif lies at 176 to 181 (DSFVEI). Position 177 is a phosphoserine; by TBK1 (S177). Residues 186-197 (GEAEGSVKEIKH) show a composition bias toward basic and acidic residues. Disordered stretches follow at residues 186-210 (GEAE…IGTS) and 255-291 (VSDF…TVGS). Residue S198 is modified to Phosphoserine. Residues 201–210 (PTRTVSIGTS) show a composition bias toward polar residues. Residues 233–502 (CLREGNQKVE…LLKENDAFED (270 aa)) adopt a coiled-coil conformation. Composition is skewed to basic and acidic residues over residues 255-268 (VSDF…RSEI) and 275-286 (STEKENEEEKGP). S336 bears the Phosphoserine mark. An interaction with HD region spans residues 405–571 (TRKESEKVDR…LQIHVMDCII (167 aa)). The interval 406 to 514 (RKESEKVDRA…RQSLMEMQSR (109 aa)) is interaction with MYO6. The UBAN signature appears at 468-473 (DFHAER). S520 bears the Phosphoserine mark. The CCHC NOA-type zinc-finger motif lies at 541 to 571 (QRNIPIHSCPKCGEVLPDIDTLQIHVMDCII). The Zn(2+) site is built by C549, C552, H565, and C569.

Self-associates. Interacts with HD. Interacts with GTF3A. Interacts with MYO6. Interacts (via UBAN) with ubiquitinated TFRC. Interacts with GTP-bound Rab8 (RAB8A and/or RAB8B). Interacts with TBC1D17. Interacts with TBK1. Interacts with TRAF3. Binds to linear ubiquitin chains. Interacts with LC3 family members MAP1LC3A, MAP1LC3B, GABARAP, GABARAPL1 and GABARAPL2; OPTN phosphorylation increases the association (at least with MAP1LC3B). Interacts with RAB12; the interaction may be indirect. Interacts with TBK1; this interaction leads to the Golgi localization of TBK1 and its subsequent activation. Interacts with palmitoyltransferase ZDHHC17/HIP14; the interaction does not lead to palmitoylation of OPTN. Interacts with CYLD. Interacts with TOM1; the interaction is indirect and is mediated by MYO6, which acts as a bridge between TOM1 and OPTN. Interacts with USP12; the interaction is independent of USP12 deubiquitinase activity and may be involved in regulation of autophagic flux. Phosphorylated by TBK1, leading to restrict bacterial proliferation in case of infection. Present in aqueous humor of the eye (at protein level).

The protein resides in the cytoplasm. Its subcellular location is the perinuclear region. The protein localises to the golgi apparatus. It localises to the trans-Golgi network. It is found in the cytoplasmic vesicle. The protein resides in the autophagosome. Its subcellular location is the recycling endosome. Plays an important role in the maintenance of the Golgi complex, in membrane trafficking, in exocytosis, through its interaction with myosin VI and Rab8. Links myosin VI to the Golgi complex and plays an important role in Golgi ribbon formation. Negatively regulates the induction of IFNB in response to RNA virus infection. Plays a neuroprotective role in the eye and optic nerve. Probably part of the TNF-alpha signaling pathway that can shift the equilibrium toward induction of cell death. May act by regulating membrane trafficking and cellular morphogenesis via a complex that contains Rab8 and huntingtin (HD). Mediates the interaction of Rab8 with the probable GTPase-activating protein TBC1D17 during Rab8-mediated endocytic trafficking, such as that of transferrin receptor (TFRC/TfR); regulates Rab8 recruitment to tubules emanating from the endocytic recycling compartment. Autophagy receptor that interacts directly with both the cargo to become degraded and an autophagy modifier of the MAP1 LC3 family; targets ubiquitin-coated bacteria (xenophagy) and appears to function in the same pathway as SQSTM1 and CALCOCO2/NDP52. The protein is Optineurin (OPTN) of Macaca mulatta (Rhesus macaque).